Here is a 666-residue protein sequence, read N- to C-terminus: Protein-arginine deiminase type-4 (666 aa).

6 residues coordinate Ca(2+): N153, D155, D165, D168, D176, and D179. Citrulline is present on residues R212 and R218. Q349 lines the Ca(2+) pocket. D350 is a catalytic residue. Ca(2+) is bound by residues E351, E353, D369, and S370. Citrulline occurs at positions 372, 374, and 383. R374 contacts substrate. Residues F407, L410, and E411 each coordinate Ca(2+). Residues H471, D473, and C648 contribute to the active site.

It belongs to the protein arginine deiminase family. Requires Ca(2+) as cofactor. Post-translationally, autocitrullination at Arg-372 and Arg-374 inactivates the enzyme. As to expression, epidermis.

It localises to the cytoplasm. Its subcellular location is the nucleus. The protein resides in the cytoplasmic granule. The enzyme catalyses L-arginyl-[protein] + H2O = L-citrullyl-[protein] + NH4(+). In terms of biological role, catalyzes the citrullination/deimination of arginine residues of proteins such as histones, thereby playing a key role in histone code and regulation of stem cell maintenance. Citrullinates histone H1 at 'Arg-54' (to form H1R54ci), histone H3 at 'Arg-2', 'Arg-8', 'Arg-17' and/or 'Arg-26' (to form H3R2ci, H3R8ci, H3R17ci, H3R26ci, respectively) and histone H4 at 'Arg-3' (to form H4R3ci). Acts as a key regulator of stem cell maintenance by mediating citrullination of histone H1: citrullination of 'Arg-54' of histone H1 (H1R54ci) results in H1 displacement from chromatin and global chromatin decondensation, thereby promoting pluripotency and stem cell maintenance. Promotes profound chromatin decondensation during the innate immune response to infection in neutrophils by mediating formation of H1R54ci. Required for the formation of neutrophil extracellular traps (NETs); NETs are mainly composed of DNA fibers and are released by neutrophils to bind pathogens during inflammation. Citrullination of histone H3 prevents their methylation by CARM1 and HRMT1L2/PRMT1 and represses transcription. Citrullinates EP300/P300 at 'Arg-2142', which favors its interaction with NCOA2/GRIP1. The chain is Protein-arginine deiminase type-4 (Padi4) from Rattus norvegicus (Rat).